A 420-amino-acid polypeptide reads, in one-letter code: Gamma-glutamyl phosphate reductase (420 aa).

It belongs to the gamma-glutamyl phosphate reductase family.

It localises to the cytoplasm. The catalysed reaction is L-glutamate 5-semialdehyde + phosphate + NADP(+) = L-glutamyl 5-phosphate + NADPH + H(+). Its pathway is amino-acid biosynthesis; L-proline biosynthesis; L-glutamate 5-semialdehyde from L-glutamate: step 2/2. Its function is as follows. Catalyzes the NADPH-dependent reduction of L-glutamate 5-phosphate into L-glutamate 5-semialdehyde and phosphate. The product spontaneously undergoes cyclization to form 1-pyrroline-5-carboxylate. The sequence is that of Gamma-glutamyl phosphate reductase from Pasteurella multocida (strain Pm70).